Here is a 63-residue protein sequence, read N- to C-terminus: Venom peptide 2b (63 aa).

The signal sequence occupies residues 1–22; the sequence is MRGTSFILFAVVVILGFLHGNA. AXPX repeat units lie at residues 22–25, 26–29, 32–35, 38–41, and 44–47; these read AEPL, ANPE, and ANPD. The propeptide occupies 23–48; the sequence is EPLANPEPSANPDPLANPDPLANPEA. Leu-62 carries the post-translational modification Leucine amide.

It belongs to the MCD family. Mastoparan subfamily. In terms of tissue distribution, expressed by the venom gland.

The protein localises to the secreted. The protein resides in the target cell membrane. Its function is as follows. Antimicrobial peptide with strong and moderate activity against the fungi B.cinerea (MIC=5 uM) and C.albicans (MIC=100 uM), the Gram-negative bacterium E.coli (MIC=200 uM) and the Gram-positive bacterium S.aureus (MIC=25 uM). Shows cytolytic activity against insect cell lines. Has potent hemolytic activity against human erythrocytes (EC(50)=64 uM). In vivo, peptide injection in the vicinity of the head and thorax of lepidopteran larvae induces feeding disorder followed by death due to starvation. This chain is Venom peptide 2b, found in Eumenes pomiformis (Potter wasp).